The chain runs to 404 residues: Keratin, type I cuticular Ha3-II (404 aa).

The interval 1–56 is head; the sequence is MPYNFCLPSLSCRTSCSSRPCVPPSCHGYTLPGACNIPANVSNCNWFCEGSFNGSE. Residues 56–367 form the IF rod domain; that stretch reads EKETMQFLND…SLLESEDCKL (312 aa). The segment at 57–91 is coil 1A; that stretch reads KETMQFLNDRLASYLEKVRQLERDNAELENLIRER. A linker 1 region spans residues 92-102; the sequence is SQQQEPLLCPS. Residues 103–203 are coil 1B; it reads YQSYFKTIEE…HEQEVNTLRC (101 aa). A linker 12 region spans residues 204–219; it reads QLGDRLNVEVDAAPAV. Residues 220–363 form a coil 2 region; that stretch reads DLNQVLNETR…NTYRSLLESE (144 aa). The interval 364 to 404 is tail; sequence DCKLPSNPCATTNACEKPIGSCVTNPCGPRSRCGPCNTFGY.

This sequence belongs to the intermediate filament family.

The polypeptide is Keratin, type I cuticular Ha3-II (KRT33B) (Homo sapiens (Human)).